A 482-amino-acid polypeptide reads, in one-letter code: Phenylalanine--tRNA ligase alpha subunit (482 aa).

L-phenylalanine is bound by residues T327, 366–368 (QIE), and Y406. E408 lines the Mg(2+) pocket. F430 lines the L-phenylalanine pocket.

The protein belongs to the class-II aminoacyl-tRNA synthetase family. Phe-tRNA synthetase alpha subunit type 2 subfamily. As to quaternary structure, tetramer of two alpha and two beta subunits. The cofactor is Mg(2+).

The protein resides in the cytoplasm. It catalyses the reaction tRNA(Phe) + L-phenylalanine + ATP = L-phenylalanyl-tRNA(Phe) + AMP + diphosphate + H(+). The polypeptide is Phenylalanine--tRNA ligase alpha subunit (Thermoplasma volcanium (strain ATCC 51530 / DSM 4299 / JCM 9571 / NBRC 15438 / GSS1)).